The sequence spans 214 residues: MKIVIADDHHVVRKGLRFFFATQDDIEVVGEAATGLEALRVIEETKPDLVLMDLSMPEMDGIQAIKKAIQQFPDTNIIVLTSYSDQEHVIPALQAGAKAYQLKDTEPEELVKTRQVHGGEYKLSTAIMPHVLTHMKNQHDPEKEKYYQLTRREKDVLTEIANGKSNKEIAAALFISEKTVKTHVSNLLAKLEVADRTQAALFAVKYNLNGEISK.

Residues 2 to 118 (KIVIADDHHV…ELVKTRQVHG (117 aa)) enclose the Response regulatory domain. Position 53 is a 4-aspartylphosphate (D53). Residues 142 to 207 (EKEKYYQLTR…QAALFAVKYN (66 aa)) form the HTH luxR-type domain. A DNA-binding region (H-T-H motif) is located at residues 166–185 (NKEIAAALFISEKTVKTHVS).

Post-translationally, phosphorylated by YhcY.

The protein localises to the cytoplasm. Its function is as follows. Member of the two-component regulatory system YhcY/YhcZ. This is an uncharacterized protein from Bacillus subtilis (strain 168).